A 57-amino-acid polypeptide reads, in one-letter code: Lantibiotic nisin-Z (57 aa).

A propeptide spanning residues 1-23 (MSTKDFNLDLVSVSKKDSGASPR) is cleaved from the precursor. 2,3-didehydrobutyrine is present on Thr-25. The lanthionine (Ser-Cys) cross-link spans 26–30 (SISLC). The residue at position 28 (Ser-28) is a 2,3-didehydroalanine (Ser). 4 consecutive cross-links (beta-methyllanthionine (Thr-Cys)) follow at residues 31-34 (TPGC), 36-42 (TGALMGC), 46-49 (TATC), and 48-51 (TCNC). Ser-56 carries the 2,3-didehydroalanine (Ser) modification.

This sequence belongs to the type A lantibiotic family. In terms of processing, maturation of lantibiotics involves the enzymatic conversion of Thr, and Ser into dehydrated AA and the formation of thioether bonds with cysteine. This is followed by membrane translocation and cleavage of the modified precursor. The structure of the 2,3-didehydrobutyrine is not discussed in PubMed:15361862. It is probably the Z-isomer by similarity.

Its function is as follows. Lanthionine-containing peptide antibiotic (lantibiotic) active on Gram-positive bacteria. The bactericidal activity of lantibiotics is based on depolarization of energized bacterial cytoplasmic membranes, initiated by the formation of aqueous transmembrane pores. The sequence is that of Lantibiotic nisin-Z (nisZ) from Lactococcus lactis subsp. lactis (Streptococcus lactis).